A 241-amino-acid chain; its full sequence is Tumor necrosis factor receptor superfamily member grnd (241 aa).

Positions 1–27 are cleaved as a signal peptide; sequence MSVRKLSALSLSIGGVPLIPSVSLVAA. At 28–98 the chain is on the extracellular side; that stretch reads ANGESRDCHG…EMLDIQNTQQ (71 aa). Cystine bridges form between Cys35–Cys47, Cys40–Cys54, Cys57–Cys77, and Cys61–Cys73. An N-linked (GlcNAc...) asparagine glycan is attached at Asn63. Residues 99 to 119 form a helical membrane-spanning segment; the sequence is LILLLLTILLVLIALRCAFQF. Over 120 to 241 the chain is Cytoplasmic; the sequence is LRWLIGNRCF…PSAATIPVAF (122 aa).

In terms of assembly, interacts (via extracellular cysteine-rich domain) with egr (via secreted TNF-homology soluble form); forms heterohexamers when 3 copies associate with egr trimers. Interacts with Traf6/TRAF2 and veli (via PDZ domain). In terms of processing, N-glycosylated on Asn-63. Glycosylation regulates ligand binding, specifically reducing affinity for the TNF egr, thereby inhibiting activation of JNK signaling. As to expression, expressed in the adult midgut; under normal conditions expressed at lower levels than the other TNF receptor wgn.

The protein resides in the apical cell membrane. The protein localises to the cytoplasmic vesicle membrane. Acts as a receptor for TNF-cytokine egr. Plays a role in activation of JNK signaling and is required for egr-induced apoptosis, including in wing imaginal discs during development. May also play an egr-independent role in cell proliferation. TNF receptor involved in triggering JNK-dependent proliferation of the enteroblast-enterocyte lineage in response to stress-induced release of egr by intestinal stem cells and enteroblasts. Involved in regulation of insulin production in response to dietary protein shortage keeping systemic growth in check. Activation in brain insulin producing cells through binding of egr released into the hemolymph in response to dietary amino acid shortage, results in JNK-dependent inhibition of insulin production. This chain is Tumor necrosis factor receptor superfamily member grnd, found in Drosophila melanogaster (Fruit fly).